Here is a 300-residue protein sequence, read N- to C-terminus: B1 kinase (300 aa).

The 267-residue stretch at 16 to 282 (WVVGPLIGKG…ITMVNSLTYF (267 aa)) folds into the Protein kinase domain. ATP-binding positions include 22–30 (IGKGGFGSI) and lysine 45. Aspartate 147 serves as the catalytic Proton acceptor.

It belongs to the protein kinase superfamily. Ser/Thr protein kinase family. Poxviruses subfamily. As to quaternary structure, interacts with host JIP1; this interaction increases the amount of MAPK bound to JIP1 and subsequently increases the activity of transcription factors, such as JUN, that respond to these complexes. Interacts with protein OPG198; this interaction inhibits the repressive activity of OPG198 pseudokinase on viral replication factory formation. Mg(2+) is required as a cofactor. In terms of processing, autophosphorylated.

The protein localises to the virion. It is found in the host cytoplasm. The catalysed reaction is L-seryl-[protein] + ATP = O-phospho-L-seryl-[protein] + ADP + H(+). The enzyme catalyses L-threonyl-[protein] + ATP = O-phospho-L-threonyl-[protein] + ADP + H(+). Its function is as follows. Essential serine/threonine-protein kinase that plays different role in the viral life cycle. Phosphorylates the host small ribosomal protein RACK1 thereby customizing the ribosomes to a state optimal for viral mRNAs (which contain poly-A leaders) but not for host mRNAs. Facilitates viral DNA replication by inhibiting host BANF1, a cellular host defense responsive to foreign DNA. Phosphorylates host BANF1 on serine and threonine residues; this leads to BANF1 relocalization to the cytoplasm, loss of dimerization and impaired DNA binding activity. Indeed, BANF1 activity depends on its DNA-binding property which is blocked by VPK1-mediated phosphorylation. Required for viral intermediate genes expression, probably by inhibiting host BANF1. Modulates cellular responses via host JUN by two different mechanisms, either by direct phosphorylation or by modulation of upstream JIP1-MAPK complexes. Seems to participate in the accumulation/processing of late proteins and thus in virion maturation. In addition, inhibits B12 repressive activity on viral DNA replication via a phosphorylation-dependent mechanism. The sequence is that of B1 kinase (OPG187) from Homo sapiens (Human).